The following is a 387-amino-acid chain: MTAPYASDPQRARGRRVKEEESTFRSSFQRDRDRIIHASAFRRLKHKTQVFIEHEGDYYRTRLTHSIEVAQVARTIAGALNLNQELTEAVALAHDLGHTPFGHTGEDALSDMMAPYGGFDHNAQAIRIVTHLERHYADFDGLNLTWETLEGLAKHNGPVTGDIPWALKAYNDTHDLELGTFASAEAQVAAIADDVAYNHHDLHDGLRAELFSTDELAELPILNMCFAEVDRLYPGLNYYRRRHEALRRFFGVLVEDVIQLAQARLMTLQPKTVTDIRAADRAIIRFSDDVFDDLKVIRSFLFDRMYRAPSVVVMRAQVTRVVEELFPHFMAHPDQLPKQWRKDVEAISSETELARIVSDYISGMTDRFALQEHARLIHGTTPTETER.

The segment at 1–26 (MTAPYASDPQRARGRRVKEEESTFRS) is disordered. Basic and acidic residues predominate over residues 17–26 (VKEEESTFRS). The HD domain occupies 62 to 198 (RLTHSIEVAQ…AAIADDVAYN (137 aa)).

It belongs to the dGTPase family. Type 2 subfamily.

The chain is Deoxyguanosinetriphosphate triphosphohydrolase-like protein from Roseobacter denitrificans (strain ATCC 33942 / OCh 114) (Erythrobacter sp. (strain OCh 114)).